The chain runs to 148 residues: Cystatin-D (148 aa).

The N-terminal stretch at 1-33 (MASLLSPSMPVLAAVALTLTLAVIPEASTNAEA) is a signal peptide. The Cystatin kininogen-type domain occupies 36-148 (VVLGGVEPAD…SMTNFNCYNF (113 aa)). Disulfide bonds link Cys101/Cys111 and Cys125/Cys145.

This sequence belongs to the cystatin family. In terms of tissue distribution, in cartilage, expressed mainly in mature chondrocytes including prehypertrophic and hypertrophic cells (at protein level). Expressed exclusively in cartilage.

The protein resides in the cytoplasm. It localises to the cytosol. May play a role in the last steps of the chondrocyte differentiation pathway as an inducer of maturation. Induces chondrocyte calcification during endochondral ossification by playing a role in the transcriptional inhibition of ENPP1, a generator of pyrophosphate which inhibits calcification. Possibly impairs the binding of a transcription factor to the ENPP1 promoter. Unlike other cystatins, does not have thiol protease inhibitor activity. This is Cystatin-D from Mus musculus (Mouse).